The sequence spans 288 residues: Syntaxin-1B (288 aa).

Residues 1-13 (MKDRTQELRSAKD) are compositionally biased toward basic and acidic residues. Residues 1 to 20 (MKDRTQELRSAKDSDDEEEV) are disordered. Topologically, residues 1-264 (MKDRTQELRS…KYQSKARRKK (264 aa)) are cytoplasmic. A phosphoserine mark is found at Ser10 and Ser14. A coiled-coil region spans residues 29-104 (MDEFFEQVEE…IEQSIEQEEG (76 aa)). One can recognise a t-SNARE coiled-coil homology domain in the interval 191 to 253 (LNEIETRHNE…ERAVSDTKKA (63 aa)). The chain crosses the membrane as a helical; Anchor for type IV membrane protein span at residues 265–288 (IMIIICCVVLGVVLASSIGGTLGL).

This sequence belongs to the syntaxin family. In terms of assembly, interacts with OTOF. Interacts with SYT6 and SYT8; the interaction is Ca(2+)-dependent. Post-translationally, phosphorylated by CK2.

Its subcellular location is the membrane. The protein localises to the nucleus. It is found in the cytoplasm. It localises to the cytoskeleton. The protein resides in the microtubule organizing center. Its subcellular location is the centrosome. The protein localises to the spindle. In terms of biological role, potentially involved in docking of synaptic vesicles at presynaptic active zones. May mediate Ca(2+)-regulation of exocytosis acrosomal reaction in sperm. The sequence is that of Syntaxin-1B (STX1B) from Homo sapiens (Human).